A 245-amino-acid chain; its full sequence is NAD(P)H-quinone oxidoreductase subunit K (245 aa).

[4Fe-4S] cluster contacts are provided by Cys58, Cys59, Cys123, and Cys154.

This sequence belongs to the complex I 20 kDa subunit family. In terms of assembly, NDH-1 can be composed of about 15 different subunits; different subcomplexes with different compositions have been identified which probably have different functions. [4Fe-4S] cluster serves as cofactor.

It localises to the cellular thylakoid membrane. The catalysed reaction is a plastoquinone + NADH + (n+1) H(+)(in) = a plastoquinol + NAD(+) + n H(+)(out). It carries out the reaction a plastoquinone + NADPH + (n+1) H(+)(in) = a plastoquinol + NADP(+) + n H(+)(out). Its function is as follows. NDH-1 shuttles electrons from an unknown electron donor, via FMN and iron-sulfur (Fe-S) centers, to quinones in the respiratory and/or the photosynthetic chain. The immediate electron acceptor for the enzyme in this species is believed to be plastoquinone. Couples the redox reaction to proton translocation, and thus conserves the redox energy in a proton gradient. Cyanobacterial NDH-1 also plays a role in inorganic carbon-concentration. This is NAD(P)H-quinone oxidoreductase subunit K from Nostoc sp. (strain PCC 7120 / SAG 25.82 / UTEX 2576).